A 304-amino-acid chain; its full sequence is Non-specific ribonucleoside hydrolase RihC (304 aa).

Residue H233 is part of the active site.

The protein belongs to the IUNH family. RihC subfamily.

Functionally, hydrolyzes both purine and pyrimidine ribonucleosides with a broad-substrate specificity. This Escherichia coli O7:K1 (strain IAI39 / ExPEC) protein is Non-specific ribonucleoside hydrolase RihC.